Here is a 239-residue protein sequence, read N- to C-terminus: Prolactin-8A4 (239 aa).

Positions 1–31 (MMKLALSQPPFSGTLLMLVVSILLLWEKAAS) are cleaved as a signal peptide. Cystine bridges form between Cys35–Cys42 and Cys102–Cys215. N-linked (GlcNAc...) asparagine glycosylation is found at Asn211 and Asn218. Cys232 and Cys239 are joined by a disulfide.

Belongs to the somatotropin/prolactin family. As to expression, placental basal zone cells.

It is found in the secreted. This is Prolactin-8A4 (Prl8a4) from Rattus norvegicus (Rat).